The chain runs to 40 residues: Dolichyl-diphosphooligosaccharide--protein glycosyltransferase subunit 4 (40 aa).

Residues 1–4 (MITD) are Lumenal-facing. The chain crosses the membrane as a helical span at residues 5–25 (VQLAIFSNVLGVFLFLLVVAY). The Cytoplasmic portion of the chain corresponds to 26–40 (HYINANTGKSSIKTK).

Belongs to the OST4 family. Component of the oligosaccharyltransferase (OST) complex.

It is found in the endoplasmic reticulum membrane. Subunit of the oligosaccharyl transferase (OST) complex that catalyzes the initial transfer of a defined glycan (Glc(3)Man(9)GlcNAc(2) in eukaryotes) from the lipid carrier dolichol-pyrophosphate to an asparagine residue within an Asn-X-Ser/Thr consensus motif in nascent polypeptide chains, the first step in protein N-glycosylation. N-glycosylation occurs cotranslationally and the complex associates with the Sec61 complex at the channel-forming translocon complex that mediates protein translocation across the endoplasmic reticulum (ER). All subunits are required for a maximal enzyme activity. The sequence is that of Dolichyl-diphosphooligosaccharide--protein glycosyltransferase subunit 4 from Drosophila virilis (Fruit fly).